The primary structure comprises 549 residues: CTP synthase (549 aa).

An amidoligase domain region spans residues 1 to 267 (MAKFVFITGG…CREVLDVLNL (267 aa)). S13 contacts CTP. S13 contributes to the UTP binding site. Residues 14-19 (SIGKGI) and D71 contribute to the ATP site. Residues D71 and E141 each coordinate Mg(2+). Residues 148–150 (DIE), 188–193 (KTKPTQ), and K224 contribute to the CTP site. UTP contacts are provided by residues 188-193 (KTKPTQ) and K224. The Glutamine amidotransferase type-1 domain occupies 292-534 (KIALVGKYVQ…IEAAQQRLPD (243 aa)). Residue G354 coordinates L-glutamine. Residue C381 is the Nucleophile; for glutamine hydrolysis of the active site. Residues 382–385 (LGMQ), E405, and R462 each bind L-glutamine. Residues H507 and E509 contribute to the active site.

The protein belongs to the CTP synthase family. As to quaternary structure, homotetramer.

It catalyses the reaction UTP + L-glutamine + ATP + H2O = CTP + L-glutamate + ADP + phosphate + 2 H(+). The catalysed reaction is L-glutamine + H2O = L-glutamate + NH4(+). It carries out the reaction UTP + NH4(+) + ATP = CTP + ADP + phosphate + 2 H(+). It functions in the pathway pyrimidine metabolism; CTP biosynthesis via de novo pathway; CTP from UDP: step 2/2. Allosterically activated by GTP, when glutamine is the substrate; GTP has no effect on the reaction when ammonia is the substrate. The allosteric effector GTP functions by stabilizing the protein conformation that binds the tetrahedral intermediate(s) formed during glutamine hydrolysis. Inhibited by the product CTP, via allosteric rather than competitive inhibition. Its function is as follows. Catalyzes the ATP-dependent amination of UTP to CTP with either L-glutamine or ammonia as the source of nitrogen. Regulates intracellular CTP levels through interactions with the four ribonucleotide triphosphates. The sequence is that of CTP synthase from Synechococcus sp. (strain CC9605).